The following is a 154-amino-acid chain: 6,7-dimethyl-8-ribityllumazine synthase (154 aa).

Residues Phe-22, 56 to 58 (AFE), and 81 to 83 (VLI) each bind 5-amino-6-(D-ribitylamino)uracil. 86–87 (ET) lines the (2S)-2-hydroxy-3-oxobutyl phosphate pocket. His-89 acts as the Proton donor in catalysis. Phe-114 provides a ligand contact to 5-amino-6-(D-ribitylamino)uracil. Arg-128 is a (2S)-2-hydroxy-3-oxobutyl phosphate binding site.

The protein belongs to the DMRL synthase family.

It carries out the reaction (2S)-2-hydroxy-3-oxobutyl phosphate + 5-amino-6-(D-ribitylamino)uracil = 6,7-dimethyl-8-(1-D-ribityl)lumazine + phosphate + 2 H2O + H(+). The protein operates within cofactor biosynthesis; riboflavin biosynthesis; riboflavin from 2-hydroxy-3-oxobutyl phosphate and 5-amino-6-(D-ribitylamino)uracil: step 1/2. Catalyzes the formation of 6,7-dimethyl-8-ribityllumazine by condensation of 5-amino-6-(D-ribitylamino)uracil with 3,4-dihydroxy-2-butanone 4-phosphate. This is the penultimate step in the biosynthesis of riboflavin. This Chlamydia abortus (strain DSM 27085 / S26/3) (Chlamydophila abortus) protein is 6,7-dimethyl-8-ribityllumazine synthase.